Reading from the N-terminus, the 801-residue chain is Triacylglycerol lipase SDP1L (801 aa).

Asparagine 130 is a glycosylation site (N-linked (GlcNAc...) asparagine). 2 helical membrane-spanning segments follow: residues 232–249 (ALLL…LGVV) and 261–277 (IIAG…VVGT). The 204-residue stretch at 233–436 (LLLSGGASLG…EMDLPMIQLK (204 aa)) folds into the PNPLA domain. The GXSXG motif lies at 264–268 (GSSVG). The active-site Nucleophile is the serine 266. 2 N-linked (GlcNAc...) asparagine glycosylation sites follow: asparagine 328 and asparagine 332. Aspartate 423 (proton acceptor) is an active-site residue. N-linked (GlcNAc...) asparagine glycosylation is found at asparagine 605, asparagine 620, asparagine 649, asparagine 653, asparagine 708, and asparagine 759. The interval 648–675 (SNRTSNLSHTYDAGSECDSPEAEDWTRS) is disordered. The disordered stretch occupies residues 750-801 (MNSEPEDSQNESEIPETPESVQLDSPEKDIIDGESSASEDGDAQANLIHDHE). The segment covering 753–765 (EPEDSQNESEIPE) has biased composition (acidic residues).

In terms of tissue distribution, highly expressed in mature pollen.

It localises to the lipid droplet. It is found in the membrane. The enzyme catalyses a triacylglycerol + H2O = a diacylglycerol + a fatty acid + H(+). Its function is as follows. May be involved in the release of fatty acids from the oil body in germinating seedlings. Can hydrolyze triacylglycerols in vitro. This Arabidopsis thaliana (Mouse-ear cress) protein is Triacylglycerol lipase SDP1L.